The primary structure comprises 88 residues: Conotoxin Gm9.1 (88 aa).

Residues 1–27 (MHLSLARSAVLMLLLLFALGNFVVVQS) form the signal peptide. Residues 28 to 58 (GLITRDVDNGQLTDNRRNLQTEWNPLSLFMS) constitute a propeptide that is removed on maturation. Intrachain disulfides connect C62-C76, C66-C78, and C72-C83. Position 87 is an asparagine amide (N87).

The protein belongs to the conotoxin P superfamily. Expressed by the venom duct.

It localises to the secreted. Functionally, neurotoxin. In vivo, elicits 'spasmodic' symptomatology. The protein is Conotoxin Gm9.1 of Conus gloriamaris (Glory-of-the-Sea cone).